Here is a 320-residue protein sequence, read N- to C-terminus: Dermonecrotic toxin LarSicTox-alphaIB2a (320 aa).

Positions 1 to 15 (MSHSSTALLHPYVAA) are cleaved as a signal peptide. Residues 16–41 (RATEKFAPIYFFCHPLQSAETDVAER) constitute a propeptide that is removed on maturation. H52 is a catalytic residue. Residues E72 and D74 each coordinate Mg(2+). Catalysis depends on H88, which acts as the Nucleophile. Intrachain disulfides connect C92/C98 and C94/C237. Position 132 (D132) interacts with Mg(2+). N297 is a glycosylation site (N-linked (GlcNAc...) asparagine).

The protein belongs to the arthropod phospholipase D family. Class II subfamily. Requires Mg(2+) as cofactor. As to expression, expressed by the venom gland.

The protein resides in the secreted. It carries out the reaction an N-(acyl)-sphingosylphosphocholine = an N-(acyl)-sphingosyl-1,3-cyclic phosphate + choline. The enzyme catalyses an N-(acyl)-sphingosylphosphoethanolamine = an N-(acyl)-sphingosyl-1,3-cyclic phosphate + ethanolamine. It catalyses the reaction a 1-acyl-sn-glycero-3-phosphocholine = a 1-acyl-sn-glycero-2,3-cyclic phosphate + choline. The catalysed reaction is a 1-acyl-sn-glycero-3-phosphoethanolamine = a 1-acyl-sn-glycero-2,3-cyclic phosphate + ethanolamine. Dermonecrotic toxins cleave the phosphodiester linkage between the phosphate and headgroup of certain phospholipids (sphingolipid and lysolipid substrates), forming an alcohol (often choline) and a cyclic phosphate. This toxin acts on sphingomyelin (SM). It may also act on ceramide phosphoethanolamine (CPE), lysophosphatidylcholine (LPC) and lysophosphatidylethanolamine (LPE), but not on lysophosphatidylserine (LPS), and lysophosphatidylglycerol (LPG). It acts by transphosphatidylation, releasing exclusively cyclic phosphate products as second products. Induces dermonecrosis, hemolysis, increased vascular permeability, edema, inflammatory response, and platelet aggregation. In Loxosceles arizonica (Arizona brown spider), this protein is Dermonecrotic toxin LarSicTox-alphaIB2a.